Consider the following 126-residue polypeptide: Histone H2B type 1-L (126 aa).

Low complexity predominate over residues 1 to 12 (MPELAKSAPAPK). The segment at 1–36 (MPELAKSAPAPKKGSKKAVTKAQKKDGKKRKRSRKE) is disordered. P2 is modified (N-acetylproline). ADP-ribosyl glutamic acid is present on E3. K6 is modified (N6-(2-hydroxyisobutyryl)lysine; alternate). Position 6 is an N6-(beta-hydroxybutyryl)lysine; alternate (K6). An N6-acetyllysine; alternate modification is found at K6. At K6 the chain carries N6-butyryllysine; alternate. K6 carries the post-translational modification N6-crotonyllysine; alternate. An N6-lactoyllysine; alternate modification is found at K6. K6 is covalently cross-linked (Glycyl lysine isopeptide (Lys-Gly) (interchain with G-Cter in SUMO2); alternate). Position 7 is an ADP-ribosylserine (S7). K12 is subject to N6-(beta-hydroxybutyryl)lysine; alternate. K12 and K13 each carry N6-acetyllysine; alternate. An N6-crotonyllysine; alternate mark is found at K12 and K13. The residue at position 12 (K12) is an N6-lactoyllysine; alternate. Position 13 is an N6-(2-hydroxyisobutyryl)lysine; alternate (K13). A Phosphoserine; by STK4/MST1 modification is found at S15. K16, K17, K21, and K24 each carry N6-acetyllysine; alternate. K16, K17, K21, and K24 each carry N6-crotonyllysine; alternate. 4 positions are modified to N6-lactoyllysine; alternate: K16, K17, K21, and K24. Residues K17 and K21 each carry the N6-(beta-hydroxybutyryl)lysine; alternate modification. K17 is modified (N6-glutaryllysine; alternate). Residues K21 and K24 each carry the N6-(2-hydroxyisobutyryl)lysine; alternate modification. K21 bears the N6-butyryllysine; alternate mark. K21 is covalently cross-linked (Glycyl lysine isopeptide (Lys-Gly) (interchain with G-Cter in SUMO2); alternate). Residue K25 is modified to N6-(2-hydroxyisobutyryl)lysine. At K35 the chain carries N6-(2-hydroxyisobutyryl)lysine; alternate. K35 carries the N6-(beta-hydroxybutyryl)lysine; alternate modification. Position 35 is an N6-crotonyllysine; alternate (K35). K35 bears the N6-glutaryllysine; alternate mark. N6-succinyllysine; alternate is present on K35. K35 is covalently cross-linked (Glycyl lysine isopeptide (Lys-Gly) (interchain with G-Cter in ubiquitin); alternate). At E36 the chain carries PolyADP-ribosyl glutamic acid. S37 is modified (phosphoserine; by AMPK). N6-(2-hydroxyisobutyryl)lysine; alternate is present on residues K44, K47, and K58. Position 44 is an N6-lactoyllysine; alternate (K44). 2 positions are modified to N6-glutaryllysine; alternate: K44 and K47. N6-methyllysine; alternate is present on K47. K58 bears the N6,N6-dimethyllysine; alternate mark. R80 carries the post-translational modification Dimethylated arginine. The residue at position 86 (K86) is an N6-(2-hydroxyisobutyryl)lysine; alternate. K86 is subject to N6-(beta-hydroxybutyryl)lysine; alternate. K86 is subject to N6-acetyllysine; alternate. K86 carries the N6-lactoyllysine; alternate modification. K86 is subject to N6,N6,N6-trimethyllysine; alternate. An omega-N-methylarginine mark is found at R87 and R93. K109 bears the N6-(2-hydroxyisobutyryl)lysine; alternate mark. Residue K109 is modified to N6-lactoyllysine; alternate. Residue K109 is modified to N6-glutaryllysine; alternate. K109 bears the N6-methyllysine; alternate mark. S113 carries an O-linked (GlcNAc) serine glycan. Position 116 is a phosphothreonine (T116). An N6-(2-hydroxyisobutyryl)lysine; alternate mark is found at K117 and K121. An N6-(beta-hydroxybutyryl)lysine; alternate mark is found at K117 and K121. An N6-lactoyllysine; alternate mark is found at K117 and K121. N6-glutaryllysine; alternate occurs at positions 117 and 121. An N6-succinyllysine; alternate mark is found at K117 and K121. The residue at position 117 (K117) is an N6-malonyllysine; alternate. Position 117 is an N6-methylated lysine; alternate (K117). A Glycyl lysine isopeptide (Lys-Gly) (interchain with G-Cter in ubiquitin); alternate cross-link involves residue K121.

The protein belongs to the histone H2B family. In terms of assembly, the nucleosome is a histone octamer containing two molecules each of H2A, H2B, H3 and H4 assembled in one H3-H4 heterotetramer and two H2A-H2B heterodimers. The octamer wraps approximately 147 bp of DNA. Post-translationally, monoubiquitination at Lys-35 (H2BK34Ub) by the MSL1/MSL2 dimer is required for histone H3 'Lys-4' (H3K4me) and 'Lys-79' (H3K79me) methylation and transcription activation at specific gene loci, such as HOXA9 and MEIS1 loci. Similarly, monoubiquitination at Lys-121 (H2BK120Ub) by the RNF20/40 complex gives a specific tag for epigenetic transcriptional activation and is also prerequisite for histone H3 'Lys-4' and 'Lys-79' methylation. It also functions cooperatively with the FACT dimer to stimulate elongation by RNA polymerase II. H2BK120Ub also acts as a regulator of mRNA splicing: deubiquitination by USP49 is required for efficient cotranscriptional splicing of a large set of exons. In terms of processing, phosphorylation at Ser-37 (H2BS36ph) by AMPK in response to stress promotes transcription. Phosphorylated on Ser-15 (H2BS14ph) by STK4/MST1 during apoptosis; which facilitates apoptotic chromatin condensation. Also phosphorylated on Ser-15 in response to DNA double strand breaks (DSBs), and in correlation with somatic hypermutation and immunoglobulin class-switch recombination. GlcNAcylation at Ser-113 promotes monoubiquitination of Lys-121. It fluctuates in response to extracellular glucose, and associates with transcribed genes. Post-translationally, ADP-ribosylated by PARP1 or PARP2 on Ser-7 (H2BS6ADPr) in response to DNA damage. H2BS6ADPr promotes recruitment of CHD1L. Mono-ADP-ribosylated on Glu-3 (H2BE2ADPr) by PARP3 in response to single-strand breaks. Poly ADP-ribosylation on Glu-36 (H2BE35ADPr) by PARP1 regulates adipogenesis: it inhibits phosphorylation at Ser-37 (H2BS36ph), thereby blocking expression of pro-adipogenetic genes. In terms of processing, crotonylation (Kcr) is specifically present in male germ cells and marks testis-specific genes in post-meiotic cells, including X-linked genes that escape sex chromosome inactivation in haploid cells. Crotonylation marks active promoters and enhancers and confers resistance to transcriptional repressors. It is also associated with post-meiotically activated genes on autosomes. Lactylated in macrophages by EP300/P300 by using lactoyl-CoA directly derived from endogenous or exogenous lactate, leading to stimulates gene transcription.

It is found in the nucleus. The protein resides in the chromosome. In terms of biological role, core component of nucleosome. Nucleosomes wrap and compact DNA into chromatin, limiting DNA accessibility to the cellular machineries which require DNA as a template. Histones thereby play a central role in transcription regulation, DNA repair, DNA replication and chromosomal stability. DNA accessibility is regulated via a complex set of post-translational modifications of histones, also called histone code, and nucleosome remodeling. The polypeptide is Histone H2B type 1-L (Homo sapiens (Human)).